A 726-amino-acid chain; its full sequence is Pre-mRNA-splicing factor CLF1 (726 aa).

HAT repeat units follow at residues 55-87 (EFQA…WEAS), 89-121 (NEYE…MELK), 123-155 (RNIN…LEEL), 157-188 (LNVS…LEER), 190-221 (NELD…FEED), 223-262 (GQPD…METR), 264-298 (KEFE…FEKQ), 308-340 (TVLG…LEED), 352-386 (VEPM…LWLQ), 396-432 (KDYD…FEIR), 434-465 (LDVS…LEMR), 467-499 (REFD…VESA), 501-534 (EDFE…FEAG), 536-567 (GERE…MEIA), 585-626 (GDAD…EHGD), and 635-667 (DMLP…DDER). Residues 682 to 726 (AWAQQRAGQGEEGGLSYDLPSDSEDENEDGDEDGDGREEEGMDQD) are disordered. Acidic residues predominate over residues 702 to 726 (SDSEDENEDGDEDGDGREEEGMDQD).

It belongs to the crooked-neck family. As to quaternary structure, associated with the spliceosome.

The protein resides in the nucleus. Involved in pre-mRNA splicing and cell cycle progression. Required for the spliceosome assembly and initiation of the DNA replication. The polypeptide is Pre-mRNA-splicing factor CLF1 (CLF1) (Cryptococcus neoformans var. neoformans serotype D (strain B-3501A) (Filobasidiella neoformans)).